A 163-amino-acid chain; its full sequence is UPF0763 protein C8J_0930 (163 aa).

The protein belongs to the UPF0763 family.

This is UPF0763 protein C8J_0930 from Campylobacter jejuni subsp. jejuni serotype O:6 (strain 81116 / NCTC 11828).